The sequence spans 458 residues: tRNA-2-methylthio-N(6)-dimethylallyladenosine synthase (458 aa).

One can recognise an MTTase N-terminal domain in the interval 15–134; sequence KKVFIKTYGC…LPDLLEQTKQ (120 aa). Residues C24, C60, C97, C175, C179, and C182 each coordinate [4Fe-4S] cluster. The Radical SAM core domain occupies 161–393; sequence RKRGVSAFLT…QVLLLEQQNA (233 aa). The TRAM domain occupies 396-457; it reads RSKIGQTTDV…SNSFVGEMTN (62 aa).

This sequence belongs to the methylthiotransferase family. MiaB subfamily. In terms of assembly, monomer. Requires [4Fe-4S] cluster as cofactor.

Its subcellular location is the cytoplasm. It catalyses the reaction N(6)-dimethylallyladenosine(37) in tRNA + (sulfur carrier)-SH + AH2 + 2 S-adenosyl-L-methionine = 2-methylsulfanyl-N(6)-dimethylallyladenosine(37) in tRNA + (sulfur carrier)-H + 5'-deoxyadenosine + L-methionine + A + S-adenosyl-L-homocysteine + 2 H(+). Its function is as follows. Catalyzes the methylthiolation of N6-(dimethylallyl)adenosine (i(6)A), leading to the formation of 2-methylthio-N6-(dimethylallyl)adenosine (ms(2)i(6)A) at position 37 in tRNAs that read codons beginning with uridine. The chain is tRNA-2-methylthio-N(6)-dimethylallyladenosine synthase from Bartonella henselae (strain ATCC 49882 / DSM 28221 / CCUG 30454 / Houston 1) (Rochalimaea henselae).